The sequence spans 166 residues: Small ribosomal subunit protein uS5 (166 aa).

In terms of domain architecture, S5 DRBM spans 12–75 (YIEKLVQVNR…EAARRNMIQV (64 aa)).

This sequence belongs to the universal ribosomal protein uS5 family. As to quaternary structure, part of the 30S ribosomal subunit. Contacts proteins S4 and S8.

Its function is as follows. With S4 and S12 plays an important role in translational accuracy. In terms of biological role, located at the back of the 30S subunit body where it stabilizes the conformation of the head with respect to the body. This chain is Small ribosomal subunit protein uS5, found in Pseudomonas syringae pv. tomato (strain ATCC BAA-871 / DC3000).